A 447-amino-acid chain; its full sequence is Trigger factor (447 aa).

Positions 159-244 (GDMLLMQVES…VREIKEEKLP (86 aa)) constitute a PPIase FKBP-type domain.

The protein belongs to the FKBP-type PPIase family. Tig subfamily.

The protein localises to the cytoplasm. It carries out the reaction [protein]-peptidylproline (omega=180) = [protein]-peptidylproline (omega=0). In terms of biological role, involved in protein export. Acts as a chaperone by maintaining the newly synthesized protein in an open conformation. Functions as a peptidyl-prolyl cis-trans isomerase. The polypeptide is Trigger factor (Dehalococcoides mccartyi (strain CBDB1)).